We begin with the raw amino-acid sequence, 242 residues long: Tryptophan synthase alpha chain (242 aa).

Catalysis depends on proton acceptor residues glutamate 31 and aspartate 42.

It belongs to the TrpA family. In terms of assembly, tetramer of two alpha and two beta chains.

The catalysed reaction is (1S,2R)-1-C-(indol-3-yl)glycerol 3-phosphate + L-serine = D-glyceraldehyde 3-phosphate + L-tryptophan + H2O. Its pathway is amino-acid biosynthesis; L-tryptophan biosynthesis; L-tryptophan from chorismate: step 5/5. Functionally, the alpha subunit is responsible for the aldol cleavage of indoleglycerol phosphate to indole and glyceraldehyde 3-phosphate. In Staphylococcus aureus (strain USA300), this protein is Tryptophan synthase alpha chain.